The primary structure comprises 353 residues: Photosystem II D2 protein (353 aa).

Threonine 2 carries the post-translational modification N-acetylthreonine. Threonine 2 carries the phosphothreonine modification. Residues 41–61 (CAYFSLGGWLTGTTFVTSWYT) traverse the membrane as a helical segment. Histidine 118 contributes to the chlorophyll a binding site. A helical transmembrane segment spans residues 125 to 141 (GFMLRQFELARSVQLRP). Pheophytin a is bound by residues glutamine 130 and asparagine 143. A helical membrane pass occupies residues 153–166 (VFVSVFLIYPLGQS). Residue histidine 198 participates in chlorophyll a binding. Residues 208–228 (AALLCAIHGATVENTLFEDGD) form a helical membrane-spanning segment. The a plastoquinone site is built by histidine 215 and phenylalanine 262. Histidine 215 lines the Fe cation pocket. Histidine 269 lines the Fe cation pocket. The chain crosses the membrane as a helical span at residues 279–295 (GLWMSAIGVVGLALNLR).

It belongs to the reaction center PufL/M/PsbA/D family. PSII is composed of 1 copy each of membrane proteins PsbA, PsbB, PsbC, PsbD, PsbE, PsbF, PsbH, PsbI, PsbJ, PsbK, PsbL, PsbM, PsbT, PsbX, PsbY, PsbZ, Psb30/Ycf12, at least 3 peripheral proteins of the oxygen-evolving complex and a large number of cofactors. It forms dimeric complexes. It depends on The D1/D2 heterodimer binds P680, chlorophylls that are the primary electron donor of PSII, and subsequent electron acceptors. It shares a non-heme iron and each subunit binds pheophytin, quinone, additional chlorophylls, carotenoids and lipids. There is also a Cl(-1) ion associated with D1 and D2, which is required for oxygen evolution. The PSII complex binds additional chlorophylls, carotenoids and specific lipids. as a cofactor.

It is found in the plastid. The protein resides in the chloroplast thylakoid membrane. It carries out the reaction 2 a plastoquinone + 4 hnu + 2 H2O = 2 a plastoquinol + O2. In terms of biological role, photosystem II (PSII) is a light-driven water:plastoquinone oxidoreductase that uses light energy to abstract electrons from H(2)O, generating O(2) and a proton gradient subsequently used for ATP formation. It consists of a core antenna complex that captures photons, and an electron transfer chain that converts photonic excitation into a charge separation. The D1/D2 (PsbA/PsbD) reaction center heterodimer binds P680, the primary electron donor of PSII as well as several subsequent electron acceptors. D2 is needed for assembly of a stable PSII complex. This is Photosystem II D2 protein from Chara vulgaris (Common stonewort).